Consider the following 470-residue polypeptide: FAD-dependent monooxygenase SAT7 (470 aa).

Residues 28 to 48 (GLSVAIVGGGIVGIALALGLV) form a helical membrane-spanning segment. The FAD site is built by E58, A71, and R143. Active-site residues include R227 and Y260. Residues D351 and A364 each coordinate FAD.

Belongs to the paxM FAD-dependent monooxygenase family. FAD serves as cofactor.

The protein resides in the membrane. The protein operates within mycotoxin biosynthesis. Its function is as follows. FAD-dependent monooxygenase; part of the satratoxin SC1 cluster involved in the biosynthesis of satratoxins, trichothecene mycotoxins that are associated with human food poisonings. Satratoxins are suggested to be made by products of multiple gene clusters (SC1, SC2 and SC3) that encode 21 proteins in all, including polyketide synthases, acetyltransferases, and other enzymes expected to modify the trichothecene skeleton. SC1 encodes 10 proteins, SAT1 to SAT10. The largest are SAT8, which encodes a putative polyketide synthase (PKS) with a conventional non-reducing architecture, and SAT10, a putative protein containing four ankyrin repeats and thus may be involved in protein scaffolding. The putative short-chain reductase SAT3 may assist the PKS in some capacity. SAT6 contains a secretory lipase domain and acts probably as a trichothecene esterase. SAT5 encodes a putative acetyltransferase, and so, with SAT6, may affect endogenous protection from toxicity. The probable transcription factor SAT9 may regulate the expression of the SC1 cluster. SC2 encodes proteins SAT11 to SAT16, the largest of which encodes the putative reducing PKS SAT13. SAT11 is a cytochrome P450 monooxygenase, while SAT14 and SAT16 are probable acetyltransferases. The SC2 cluster may be regulated by the transcription factor SAT15. SC3 is a small cluster that encodes 5 proteins, SAT17 to SAT21. SAT21 is a putative MFS-type transporter which may have a role in exporting secondary metabolites. The four other proteins putatively encoded in SC3 include the taurine hydroxylase-like protein SAT17, the O-methyltransferase SAT18, the acetyltransferase SAT19, and the Cys6-type zinc finger SAT20, the latter being probably involved in regulation of SC3 expression. The chain is FAD-dependent monooxygenase SAT7 from Stachybotrys chartarum (strain CBS 109288 / IBT 7711) (Toxic black mold).